The sequence spans 78 residues: MQPKFNNQAKQDKLVLTGKILEIIHGDKFRVLLENNVEVDAHLAGKMRMRRLRILPGDLVEVEFSPYDLKLGRIIGRK.

The S1-like domain occupies Lys4–Lys78.

It belongs to the IF-1 family. Component of the 30S ribosomal translation pre-initiation complex which assembles on the 30S ribosome in the order IF-2 and IF-3, IF-1 and N-formylmethionyl-tRNA(fMet); mRNA recruitment can occur at any time during PIC assembly.

The protein resides in the cytoplasm. In terms of biological role, one of the essential components for the initiation of protein synthesis. Stabilizes the binding of IF-2 and IF-3 on the 30S subunit to which N-formylmethionyl-tRNA(fMet) subsequently binds. Helps modulate mRNA selection, yielding the 30S pre-initiation complex (PIC). Upon addition of the 50S ribosomal subunit IF-1, IF-2 and IF-3 are released leaving the mature 70S translation initiation complex. The protein is Translation initiation factor IF-1 of Mycoplasma pneumoniae (strain ATCC 29342 / M129 / Subtype 1) (Mycoplasmoides pneumoniae).